Here is a 232-residue protein sequence, read N- to C-terminus: Orotidine 5'-phosphate decarboxylase (232 aa).

Residues Asp11, Lys32, Asp59 to Thr68, Thr116, Arg178, Gln188, Gly208, and Arg209 contribute to the substrate site. Lys61 acts as the Proton donor in catalysis.

Belongs to the OMP decarboxylase family. Type 1 subfamily. Homodimer.

The enzyme catalyses orotidine 5'-phosphate + H(+) = UMP + CO2. Its pathway is pyrimidine metabolism; UMP biosynthesis via de novo pathway; UMP from orotate: step 2/2. In terms of biological role, catalyzes the decarboxylation of orotidine 5'-monophosphate (OMP) to uridine 5'-monophosphate (UMP). The protein is Orotidine 5'-phosphate decarboxylase of Synechococcus sp. (strain JA-3-3Ab) (Cyanobacteria bacterium Yellowstone A-Prime).